Consider the following 319-residue polypeptide: ADP-L-glycero-D-manno-heptose-6-epimerase (319 aa).

Residues F10–I11, D31–D32, K38, K53, and E75–S79 each bind NADP(+). The active-site Proton acceptor is Y139. K143 provides a ligand contact to NADP(+). N168 contributes to the substrate binding site. 2 residues coordinate NADP(+): V169 and K177. K177 (proton acceptor) is an active-site residue. Substrate contacts are provided by residues S179, H186, F200–A203, R213, and Y281.

This sequence belongs to the NAD(P)-dependent epimerase/dehydratase family. HldD subfamily. Homopentamer. NADP(+) is required as a cofactor.

It catalyses the reaction ADP-D-glycero-beta-D-manno-heptose = ADP-L-glycero-beta-D-manno-heptose. Its pathway is nucleotide-sugar biosynthesis; ADP-L-glycero-beta-D-manno-heptose biosynthesis; ADP-L-glycero-beta-D-manno-heptose from D-glycero-beta-D-manno-heptose 7-phosphate: step 4/4. Functionally, catalyzes the interconversion between ADP-D-glycero-beta-D-manno-heptose and ADP-L-glycero-beta-D-manno-heptose via an epimerization at carbon 6 of the heptose. The chain is ADP-L-glycero-D-manno-heptose-6-epimerase from Aromatoleum aromaticum (strain DSM 19018 / LMG 30748 / EbN1) (Azoarcus sp. (strain EbN1)).